The primary structure comprises 575 residues: DNA mismatch repair protein MutL (575 aa).

The protein belongs to the DNA mismatch repair MutL/HexB family.

Functionally, this protein is involved in the repair of mismatches in DNA. It is required for dam-dependent methyl-directed DNA mismatch repair. May act as a 'molecular matchmaker', a protein that promotes the formation of a stable complex between two or more DNA-binding proteins in an ATP-dependent manner without itself being part of a final effector complex. The polypeptide is DNA mismatch repair protein MutL (Dictyoglomus thermophilum (strain ATCC 35947 / DSM 3960 / H-6-12)).